The primary structure comprises 267 residues: Hydroxyethylthiazole kinase (267 aa).

Substrate is bound at residue Met46. Residues Arg122 and Ser168 each contribute to the ATP site. Gly195 is a substrate binding site.

The protein belongs to the Thz kinase family. The cofactor is Mg(2+).

It carries out the reaction 5-(2-hydroxyethyl)-4-methylthiazole + ATP = 4-methyl-5-(2-phosphooxyethyl)-thiazole + ADP + H(+). The protein operates within cofactor biosynthesis; thiamine diphosphate biosynthesis; 4-methyl-5-(2-phosphoethyl)-thiazole from 5-(2-hydroxyethyl)-4-methylthiazole: step 1/1. Functionally, catalyzes the phosphorylation of the hydroxyl group of 4-methyl-5-beta-hydroxyethylthiazole (THZ). The sequence is that of Hydroxyethylthiazole kinase from Nitratidesulfovibrio vulgaris (strain DP4) (Desulfovibrio vulgaris).